The sequence spans 984 residues: Zinc finger and BTB domain-containing protein 4 (984 aa).

The 102-residue stretch at 30–131 folds into the BTB domain; that stretch reads CDVTLIAGDT…IYSARLALPG (102 aa). Residue K40 forms a Glycyl lysine isopeptide (Lys-Gly) (interchain with G-Cter in SUMO2) linkage. 3 disordered regions span residues 71–104, 172–210, and 227–262; these read TGGS…PPRV, MVTS…RRPF, and THEA…ASAL. The span at 74–88 shows a compositional bias: low complexity; it reads SAPSPATTTAASSSS. Residues 165 to 324 are interaction with CBFA2T3; the sequence is VPPAPSSMVT…CRYCEKVFAL (160 aa). The C2H2-type 1; atypical zinc-finger motif lies at 210 to 232; that stretch reads FPCPRCGKSFIHPKRLQTHEAQC. A compositionally biased stretch (gly residues) spans 242–255; the sequence is AGLGPGGSGPGGPA. C2H2-type zinc fingers lie at residues 285-307, 313-335, and 341-364; these read YVCA…SNVH, YPCR…EVWH, and YQCI…RAFH. S367 carries the post-translational modification Phosphoserine. The segment at 461-575 is disordered; sequence GSSSSGAAGG…GSSQLQAPPP (115 aa). Residues 467-477 are compositionally biased toward gly residues; the sequence is AAGGGPVGTGG. 2 stretches are compositionally biased toward low complexity: residues 478–488 and 507–529; these read SQAASVITYTT and ATPT…ATAT. Residue K548 forms a Glycyl lysine isopeptide (Lys-Gly) (interchain with G-Cter in SUMO2) linkage. Over residues 552–565 the composition is skewed to gly residues; it reads GVSGSGGSPTGTGR. A Glycyl lysine isopeptide (Lys-Gly) (interchain with G-Cter in SUMO2) cross-link involves residue K590. 5 disordered regions span residues 593 to 696, 713 to 734, 756 to 836, 853 to 876, and 947 to 984; these read ISET…GERR, RKHQ…RSST, QRHA…VAGG, GGSR…ASEG, and QTAP…GDVG. Acidic residues predominate over residues 604–627; it reads SGEEVEESEEEEEEEEEEDQEDQE. Residues 628–637 are compositionally biased toward basic and acidic residues; it reads ESKAGGEDQL. C2H2-type zinc fingers lie at residues 697–719 and 736–758; these read HRCG…QEAH and FTCP…GQRH. Phosphothreonine; by HIPK2 occurs at positions 766 and 768. Residues 807–819 are compositionally biased toward low complexity; it reads AAAAAAEASESAS. The segment covering 948–966 has biased composition (pro residues); sequence TAPPTPPTPPPPLPLPVPP. T955 carries the phosphothreonine; by HIPK2 modification.

In terms of assembly, interacts with HIPK2. Interacts with CBFA2T3. Interacts with ZBTB38. In terms of processing, phosphorylated by HIPK2. This phosphorylation reduces stability and triggers ZBTB4 protein degradation in response to DNA damage.

Its subcellular location is the nucleus. The protein resides in the chromosome. Its function is as follows. Transcriptional repressor with bimodal DNA-binding specificity. Represses transcription in a methyl-CpG-dependent manner. Binds with a higher affinity to methylated CpG dinucleotides in the consensus sequence 5'-CGCG-3' but can also bind to the non-methylated consensus sequence 5'-CTGCNA-3' also known as the consensus kaiso binding site (KBS). Can also bind specifically to a single methyl-CpG pair and can bind hemimethylated DNA but with a lower affinity compared to methylated DNA. Plays a role in postnatal myogenesis, may be involved in the regulation of satellite cells self-renewal. The chain is Zinc finger and BTB domain-containing protein 4 (Zbtb4) from Rattus norvegicus (Rat).